The chain runs to 418 residues: 26S proteasome regulatory subunit 6B (418 aa).

The residue at position 1 (M1) is an N-acetylmethionine. Residue S21 is modified to Phosphoserine. At T25 the chain carries Phosphothreonine. Residue S28 is modified to Phosphoserine. G206 to T213 provides a ligand contact to ATP. N6-acetyllysine occurs at positions 397 and 401.

This sequence belongs to the AAA ATPase family. As to quaternary structure, component of the 19S proteasome regulatory particle complex. The 26S proteasome consists of a 20S core particle (CP) and two 19S regulatory subunits (RP). The regulatory particle is made of a lid composed of 9 subunits, a base containing 6 ATPases including PSMC4 and few additional components. Interacts with NR1I3. Interacts with PAAF1. Interacts with TRIM5. Interacts with ZFAND1.

It localises to the cytoplasm. The protein localises to the nucleus. Component of the 26S proteasome, a multiprotein complex involved in the ATP-dependent degradation of ubiquitinated proteins. This complex plays a key role in the maintenance of protein homeostasis by removing misfolded or damaged proteins, which could impair cellular functions, and by removing proteins whose functions are no longer required. Therefore, the proteasome participates in numerous cellular processes, including cell cycle progression, apoptosis, or DNA damage repair. PSMC4 belongs to the heterohexameric ring of AAA (ATPases associated with diverse cellular activities) proteins that unfolds ubiquitinated target proteins that are concurrently translocated into a proteolytic chamber and degraded into peptides. This chain is 26S proteasome regulatory subunit 6B (Psmc4), found in Mus musculus (Mouse).